A 1596-amino-acid polypeptide reads, in one-letter code: A-kinase anchor protein SPHKAP (1596 aa).

Disordered stretches follow at residues 214–233, 242–319, 389–432, 462–481, and 760–809; these read KHGRLAGQRAAEDDTNRSVS, ASEQ…TPKQ, DNSE…GHPA, SGEEYECEDEEEESETDQGE, and EQSD…SSSS. Residues 292–306 show a composition bias toward polar residues; that stretch reads TLCTSSNSQKLSRTY. The span at 462–479 shows a compositional bias: acidic residues; that stretch reads SGEEYECEDEEEESETDQ. Residues 829 to 846 are PKA-RII subunit binding domain; that stretch reads FAEDLATTVVSMATELAA. 3 disordered regions span residues 958–1022, 1282–1310, and 1328–1443; these read VVDT…ISKQ, VGERRHGFKHSRCNNSGNRPGVEHQENSC, and VPLI…SSLG. Residues 959 to 971 are compositionally biased toward polar residues; the sequence is VDTSKSGQSSRSR. The span at 1333 to 1356 shows a compositional bias: basic and acidic residues; sequence IEPDQREEASEEKGGVETHHREAS. The segment covering 1357–1372 has biased composition (polar residues); it reads HQTQQQSGKGSETATK. Composition is skewed to low complexity over residues 1398–1409 and 1430–1443; these read LSASSEESGSGS and LSEGNGNSSTSSLG.

It belongs to the AKAP110 family.

It localises to the cytoplasm. Its function is as follows. Anchoring protein that mediates the subcellular compartmentation of cAMP-dependent protein kinase (PKA type II). This is A-kinase anchor protein SPHKAP (sphkap) from Danio rerio (Zebrafish).